Here is a 366-residue protein sequence, read N- to C-terminus: Aminomethyltransferase (366 aa).

The protein belongs to the GcvT family. The glycine cleavage system is composed of four proteins: P, T, L and H.

The catalysed reaction is N(6)-[(R)-S(8)-aminomethyldihydrolipoyl]-L-lysyl-[protein] + (6S)-5,6,7,8-tetrahydrofolate = N(6)-[(R)-dihydrolipoyl]-L-lysyl-[protein] + (6R)-5,10-methylene-5,6,7,8-tetrahydrofolate + NH4(+). Functionally, the glycine cleavage system catalyzes the degradation of glycine. This Thermosynechococcus vestitus (strain NIES-2133 / IAM M-273 / BP-1) protein is Aminomethyltransferase.